The following is a 213-amino-acid chain: Octanoyltransferase (213 aa).

One can recognise a BPL/LPL catalytic domain in the interval 32 to 207 (DSTLDEIWLV…NILALLNNPD (176 aa)). Substrate contacts are provided by residues 71–78 (RGGQVTYH), 138–140 (SLG), and 151–153 (GLA). Cys169 acts as the Acyl-thioester intermediate in catalysis.

The protein belongs to the LipB family.

The protein resides in the cytoplasm. The catalysed reaction is octanoyl-[ACP] + L-lysyl-[protein] = N(6)-octanoyl-L-lysyl-[protein] + holo-[ACP] + H(+). Its pathway is protein modification; protein lipoylation via endogenous pathway; protein N(6)-(lipoyl)lysine from octanoyl-[acyl-carrier-protein]: step 1/2. Catalyzes the transfer of endogenously produced octanoic acid from octanoyl-acyl-carrier-protein onto the lipoyl domains of lipoate-dependent enzymes. Lipoyl-ACP can also act as a substrate although octanoyl-ACP is likely to be the physiological substrate. In Escherichia coli O8 (strain IAI1), this protein is Octanoyltransferase.